A 188-amino-acid chain; its full sequence is uncharacterized protein (188 aa).

This is an uncharacterized protein from Haemophilus influenzae (strain ATCC 51907 / DSM 11121 / KW20 / Rd).